We begin with the raw amino-acid sequence, 438 residues long: Serine hydroxymethyltransferase (438 aa).

(6S)-5,6,7,8-tetrahydrofolate contacts are provided by residues Leu133 and Gly137–Leu139. Position 242 is an N6-(pyridoxal phosphate)lysine (Lys242).

Belongs to the SHMT family. In terms of assembly, homodimer. Pyridoxal 5'-phosphate is required as a cofactor.

The protein localises to the cytoplasm. It carries out the reaction (6R)-5,10-methylene-5,6,7,8-tetrahydrofolate + glycine + H2O = (6S)-5,6,7,8-tetrahydrofolate + L-serine. Its pathway is one-carbon metabolism; tetrahydrofolate interconversion. The protein operates within amino-acid biosynthesis; glycine biosynthesis; glycine from L-serine: step 1/1. Catalyzes the reversible interconversion of serine and glycine with tetrahydrofolate (THF) serving as the one-carbon carrier. This reaction serves as the major source of one-carbon groups required for the biosynthesis of purines, thymidylate, methionine, and other important biomolecules. Also exhibits THF-independent aldolase activity toward beta-hydroxyamino acids, producing glycine and aldehydes, via a retro-aldol mechanism. In Brucella melitensis biotype 2 (strain ATCC 23457), this protein is Serine hydroxymethyltransferase.